The chain runs to 135 residues: UPF0102 protein Aave_0630 (135 aa).

Positions 1–21 (MGILEKKTAGPGGAARKTTTR) are disordered.

This sequence belongs to the UPF0102 family.

The protein is UPF0102 protein Aave_0630 of Paracidovorax citrulli (strain AAC00-1) (Acidovorax citrulli).